A 313-amino-acid chain; its full sequence is MVSYASDVKKELTSLPVHPEHAKAELAAFLRMNGVLSLHDHQFSLDITTENPAIARRIFSLIKTAYGIEPLLIVSKKMKLKKNYQYLVRLQKQVHEILSDLEIFDSDNGLITGIPEKIMTSEQRAMSYLRGAFLAAGSVNNPETSRYHLEIYSLYENHNNDLLKLMNSFFYLNAKATKRRNGYIVYLKEAEKIGDFLHIVGAVNAMLAFEDLRIMRDMRNSVNRLVNCDTANLKKTANAAAKQVEDIQLIEKKVGLENLPEKLAILAHFRLTHPELSLKEVAAQVPDGPISKSGVNHRFQKIREMAQQLKEEN.

A DNA-binding region (H-T-H motif) is located at residues 277–311; it reads SLKEVAAQVPDGPISKSGVNHRFQKIREMAQQLKE.

The protein belongs to the WhiA family.

Involved in cell division and chromosome segregation. This chain is Probable cell division protein WhiA, found in Lactobacillus gasseri (strain ATCC 33323 / DSM 20243 / BCRC 14619 / CIP 102991 / JCM 1131 / KCTC 3163 / NCIMB 11718 / NCTC 13722 / AM63).